The sequence spans 386 residues: Cell division protein FtsZ (386 aa).

Residues 18-22, 105-107, Glu-136, Arg-140, and Asp-184 each bind GTP; these read GGGVN and GTG.

The protein belongs to the FtsZ family. Homodimer. Polymerizes to form a dynamic ring structure in a strictly GTP-dependent manner. Interacts directly with several other division proteins.

Its subcellular location is the cytoplasm. Essential cell division protein that forms a contractile ring structure (Z ring) at the future cell division site. The regulation of the ring assembly controls the timing and the location of cell division. One of the functions of the FtsZ ring is to recruit other cell division proteins to the septum to produce a new cell wall between the dividing cells. Binds GTP and shows GTPase activity. In Mycobacterium kansasii, this protein is Cell division protein FtsZ.